We begin with the raw amino-acid sequence, 275 residues long: NH(3)-dependent NAD(+) synthetase (275 aa).

46–53 (GISGGQDS) lines the ATP pocket. D52 serves as a coordination point for Mg(2+). Residue R140 coordinates deamido-NAD(+). T160 provides a ligand contact to ATP. E165 contributes to the Mg(2+) binding site. Deamido-NAD(+)-binding residues include K173 and D180. ATP is bound by residues K189 and T211. Position 260–261 (260–261 (HK)) interacts with deamido-NAD(+).

It belongs to the NAD synthetase family. As to quaternary structure, homodimer.

The enzyme catalyses deamido-NAD(+) + NH4(+) + ATP = AMP + diphosphate + NAD(+) + H(+). Its pathway is cofactor biosynthesis; NAD(+) biosynthesis; NAD(+) from deamido-NAD(+) (ammonia route): step 1/1. Catalyzes the ATP-dependent amidation of deamido-NAD to form NAD. Uses ammonia as a nitrogen source. This is NH(3)-dependent NAD(+) synthetase from Escherichia coli O8 (strain IAI1).